A 393-amino-acid polypeptide reads, in one-letter code: S-adenosylmethionine synthase (393 aa).

E9 contacts Mg(2+). H15 lines the ATP pocket. E43 provides a ligand contact to K(+). Positions 56 and 99 each coordinate L-methionine. ATP is bound by residues 167 to 169, 235 to 238, D246, 252 to 253, A269, K273, and K277; these read DGK, SGRF, and RK. Position 246 (D246) interacts with L-methionine. K277 contacts L-methionine.

The protein belongs to the AdoMet synthase family. As to quaternary structure, homotetramer. Mn(2+) serves as cofactor. Mg(2+) is required as a cofactor. The cofactor is Co(2+). Requires K(+) as cofactor.

The protein localises to the cytoplasm. The enzyme catalyses L-methionine + ATP + H2O = S-adenosyl-L-methionine + phosphate + diphosphate. It functions in the pathway amino-acid biosynthesis; S-adenosyl-L-methionine biosynthesis; S-adenosyl-L-methionine from L-methionine: step 1/1. In terms of biological role, catalyzes the formation of S-adenosylmethionine from methionine and ATP. The reaction comprises two steps that are both catalyzed by the same enzyme: formation of S-adenosylmethionine (AdoMet) and triphosphate, and subsequent hydrolysis of the triphosphate. The polypeptide is S-adenosylmethionine synthase (SAMS) (Brassica rapa subsp. pekinensis (Chinese cabbage)).